We begin with the raw amino-acid sequence, 396 residues long: Ribosomal RNA large subunit methyltransferase I (396 aa).

Positions 2-81 constitute a PUA domain; sequence SVRLVLAKGR…ESIDIAFFTR (80 aa).

Belongs to the methyltransferase superfamily. RlmI family.

It is found in the cytoplasm. It carries out the reaction cytidine(1962) in 23S rRNA + S-adenosyl-L-methionine = 5-methylcytidine(1962) in 23S rRNA + S-adenosyl-L-homocysteine + H(+). Its function is as follows. Specifically methylates the cytosine at position 1962 (m5C1962) of 23S rRNA. The sequence is that of Ribosomal RNA large subunit methyltransferase I from Escherichia coli (strain SMS-3-5 / SECEC).